The following is a 359-amino-acid chain: Methylthioribose-1-phosphate isomerase (359 aa).

Residues 50–52, Arg-93, and Gln-200 contribute to the substrate site; that span reads RGA. Asp-241 acts as the Proton donor in catalysis. Position 251-252 (251-252) interacts with substrate; it reads NK.

Belongs to the eIF-2B alpha/beta/delta subunits family. MtnA subfamily.

It carries out the reaction 5-(methylsulfanyl)-alpha-D-ribose 1-phosphate = 5-(methylsulfanyl)-D-ribulose 1-phosphate. It functions in the pathway amino-acid biosynthesis; L-methionine biosynthesis via salvage pathway; L-methionine from S-methyl-5-thio-alpha-D-ribose 1-phosphate: step 1/6. In terms of biological role, catalyzes the interconversion of methylthioribose-1-phosphate (MTR-1-P) into methylthioribulose-1-phosphate (MTRu-1-P). The sequence is that of Methylthioribose-1-phosphate isomerase from Symbiobacterium thermophilum (strain DSM 24528 / JCM 14929 / IAM 14863 / T).